Here is a 147-residue protein sequence, read N- to C-terminus: Response regulator Rcp1 (147 aa).

Positions 10 to 135 constitute a Response regulatory domain; the sequence is VILLVEDSKA…DLFKMVQGIE (126 aa). The residue at position 68 (Asp68) is a 4-aspartylphosphate.

Post-translationally, phosphorylated by Cph1.

Functionally, forms a two-component system with Cph1 in which it acts as receiver substrate. This Synechocystis sp. (strain ATCC 27184 / PCC 6803 / Kazusa) protein is Response regulator Rcp1 (rcp1).